The primary structure comprises 548 residues: Glutamate--tRNA ligase (548 aa).

The 'HIGH' region signature appears at 102–112 (PSPSGPLHIGH).

Belongs to the class-I aminoacyl-tRNA synthetase family. Glutamate--tRNA ligase type 2 subfamily.

It localises to the cytoplasm. The catalysed reaction is tRNA(Glu) + L-glutamate + ATP = L-glutamyl-tRNA(Glu) + AMP + diphosphate. In terms of biological role, catalyzes the attachment of glutamate to tRNA(Glu) in a two-step reaction: glutamate is first activated by ATP to form Glu-AMP and then transferred to the acceptor end of tRNA(Glu). In Thermoplasma acidophilum (strain ATCC 25905 / DSM 1728 / JCM 9062 / NBRC 15155 / AMRC-C165), this protein is Glutamate--tRNA ligase.